A 104-amino-acid chain; its full sequence is MAIADVTIIPIGTETPSVSAYVADVQKILEGYQAEGKIKYQLTPMNTLIEGELSDLFAVIQAIHEAPFQKGLHRVATNIRIDDRRDKKTTLESKIESVNKHLQP.

The protein belongs to the UPF0045 family.

The protein is UPF0045 protein YqgV (yqgV) of Bacillus subtilis (strain 168).